We begin with the raw amino-acid sequence, 91 residues long: ATP synthase epsilon chain (91 aa).

Belongs to the ATPase epsilon chain family. As to quaternary structure, F-type ATPases have 2 components, CF(1) - the catalytic core - and CF(0) - the membrane proton channel. CF(1) has five subunits: alpha(3), beta(3), gamma(1), delta(1), epsilon(1). CF(0) has three main subunits: a, b and c.

It is found in the cell membrane. In terms of biological role, produces ATP from ADP in the presence of a proton gradient across the membrane. This is ATP synthase epsilon chain (atpC) from Micrococcus luteus (strain ATCC 4698 / DSM 20030 / JCM 1464 / CCM 169 / CCUG 5858 / IAM 1056 / NBRC 3333 / NCIMB 9278 / NCTC 2665 / VKM Ac-2230) (Micrococcus lysodeikticus).